Reading from the N-terminus, the 355-residue chain is Fructose-1,6-bisphosphatase (355 aa).

Residues 25–30 (ILDQQH) and 37–41 (TGEFS) each bind AMP. The Mg(2+) site is built by Asp-78 and Glu-107. 121-122 (KY) is a binding site for AMP. Asp-127, Ile-129, and Asp-130 together coordinate Mg(2+). Substrate is bound at residue 130 to 133 (DGSS). Lys-149 is an AMP binding site. Substrate-binding positions include 230–233 (NEGN), 263–268 (RYIGSM), Tyr-284, and 294–296 (KLR). Residue Glu-300 participates in Mg(2+) binding.

It belongs to the FBPase class 1 family. In terms of assembly, homotetramer. Requires Mg(2+) as cofactor.

The enzyme catalyses beta-D-fructose 1,6-bisphosphate + H2O = beta-D-fructose 6-phosphate + phosphate. It functions in the pathway carbohydrate biosynthesis; gluconeogenesis. Subject to complex allosteric regulation. The enzyme can assume an active R-state, or an inactive T-state. Intermediate conformations may exist. AMP acts as allosteric inhibitor. AMP binding affects the turnover of bound substrate and not the affinity for substrate. This is Fructose-1,6-bisphosphatase (FBP1) from Kluyveromyces lactis (strain ATCC 8585 / CBS 2359 / DSM 70799 / NBRC 1267 / NRRL Y-1140 / WM37) (Yeast).